A 1179-amino-acid chain; its full sequence is ATP-dependent helicase/deoxyribonuclease subunit B (1179 aa).

This sequence belongs to the helicase family. AddB/RexB type 2 subfamily. In terms of assembly, heterodimer of AddA and RexB. Mg(2+) is required as a cofactor.

In terms of biological role, the heterodimer acts as both an ATP-dependent DNA helicase and an ATP-dependent, dual-direction single-stranded exonuclease. Recognizes the chi site generating a DNA molecule suitable for the initiation of homologous recombination. This subunit has 5' -&gt; 3' nuclease activity but not helicase activity. The sequence is that of ATP-dependent helicase/deoxyribonuclease subunit B from Lacticaseibacillus paracasei (strain ATCC 334 / BCRC 17002 / CCUG 31169 / CIP 107868 / KCTC 3260 / NRRL B-441) (Lactobacillus paracasei).